The chain runs to 685 residues: Stromal interaction molecule 1 (685 aa).

The signal sequence occupies residues 1–22 (MDVCARLALWLLWGLLLHQGQS). Residues 23-213 (LSHSHSEKNT…LLTRHNHLKD (191 aa)) are Extracellular-facing. Positions 24-43 (SHSHSEKNTGASSGATSEES) are disordered. Positions 32-41 (TGASSGATSE) are enriched in low complexity. EF-hand domains lie at 64 to 97 (SFEA…EDLN) and 102 to 126 (TVKH…AWKA). 5 residues coordinate Ca(2+): Asp-76, Asp-78, Asn-80, Asp-82, and Glu-87. N-linked (GlcNAc...) asparagine glycans are attached at residues Asn-131 and Asn-171. The SAM domain occupies 132–200 (WTVDEVIQWL…QLKALDTVLF (69 aa)). A helical membrane pass occupies residues 214 to 234 (FMLVVSIVIGVGGCWFAYIQN). Topologically, residues 235–685 (RYSKEHMKKM…LKIFKKPLKK (451 aa)) are cytoplasmic. Residues 248–442 (LEGLHRAEQS…IEILCGFQIV (195 aa)) are a coiled coil. At Ser-257 the chain carries Phosphoserine. The segment at 344–442 (PEALQKWLQL…IEILCGFQIV (99 aa)) is SOAR/CAD. The interval 475 to 483 (DDVDDMDEE) is contributes to fast Ca(2+)-dependent inactivation of CRAC channels. Positions 490–499 (MQSPSLQSSV) are enriched in low complexity. Residues 490-542 (MQSPSLQSSVRQRLTEPQHGLGSQRDLTHSDSESSLHTSDRQRVAPKPPQMGR) are disordered. Thr-504 is subject to Phosphothreonine. Ser-512 carries the post-translational modification Phosphoserine. Basic and acidic residues predominate over residues 515–532 (DLTHSDSESSLHTSDRQR). The residue at position 517 (Thr-517) is a Phosphothreonine. Phosphoserine occurs at positions 519, 521, 523, 524, 567, 575, 602, 608, 618, 621, and 628. The interval 596-685 (LMELNPSVPP…LKIFKKPLKK (90 aa)) is disordered. Low complexity predominate over residues 608–620 (SPLLDSSHSHSPS). Residues 642–645 (TRIP) carry the Microtubule tip localization signal motif. Residues 655–666 (EEDNGSIGEETD) are compositionally biased toward acidic residues. Residue Ser-660 is modified to Phosphoserine. The residue at position 665 (Thr-665) is a Phosphothreonine. Ser-668 carries the phosphoserine modification. Positions 670–685 (GRKKFPLKIFKKPLKK) are enriched in basic residues. The required for generation of inwardly rectifying CRAC currents stretch occupies residues 672–685 (KKFPLKIFKKPLKK).

In terms of assembly, monomer in the presence of Ca(2+). It oligomerizes in absence of Ca(2+). Forms homooligomers and heterooligomers with STIM2. Interacts with pore-forming subunits of CRAC channels, ORAI1, ORAI2 and ORAI3; this interaction is potentiated upon Ca(2+) store depletion. Interacts (via the transmembrane region and the SOAR/CAD domain) with SPPL3; the interaction promotes the binding of STIM1 to ORAI1. Interacts with ORAI1. Interacts with MAPRE1; probably required for targeting to the growing microtubule plus ends. Interacts with CRACR2A/EFCAB4B; the interaction is direct and takes place in absence of Ca(2+). Forms a complex with CRACR2A/EFCAB4B and ORAI1 at low concentration of Ca(2+), the complex dissociates at elevated Ca(2+) concentrations. Interacts with SARAF, promoting a slow inactivation of STIM1-dependent SOCE activity, possibly by facilitating the deoligomerization of STIM1. Interacts with EFHB; the interaction takes place upon Ca(2+)-store depletion and inhibits the association with SARAF. Interacts with ASPH. Interacts with SLC35G1; intracellular Ca(2+)-dependent. May interact with ATP1A1, ATP2A2, ATP2B1, ATP2B4, KPNB1 and XPO1; through SLC35G1. Interacts with TMEM203. Interacts with STIMATE, promoting STIM1 conformational switch. Interacts with TMEM178A. Interacts with CASQ1 (via C-terminal end and preferentially with the monomeric form); this interaction increases in response to a depletion of intracellular Ca(2+), decreases both STIM1 aggregation and clustering, interaction of STIM1 with ORAI1 and store-operated Ca(2+) entry (SOCE) activity. Interacts with ADCY8. Glycosylation is required for cell surface expression. In terms of processing, phosphorylated predominantly on Ser residues.

It is found in the cell membrane. It localises to the endoplasmic reticulum membrane. Its subcellular location is the sarcoplasmic reticulum. The protein localises to the cytoplasm. The protein resides in the cytoskeleton. Acts as a Ca(2+) sensor that gates two major inward rectifying Ca(2+) channels at the plasma membrane: Ca(2+) release-activated Ca(2+) (CRAC) channels and arachidonate-regulated Ca(2+)-selective (ARC) channels. Plays a role in mediating store-operated Ca(2+) entry (SOCE), a Ca(2+) influx following depletion of intracellular Ca(2+) stores. Upon Ca(2+) depletion, translocates from the endoplasmic reticulum to the plasma membrane where it activates CRAC channel pore-forming subunits ORA1, ORA2 and ORAI3 to generate sustained and oscillatory Ca(2+) entry. Involved in enamel formation. The polypeptide is Stromal interaction molecule 1 (Rattus norvegicus (Rat)).